The primary structure comprises 375 residues: tRNA-specific 2-thiouridylase MnmA (375 aa).

Residues 9–16 (AMSGGVDS) and Leu-35 each bind ATP. Cys-105 serves as the catalytic Nucleophile. Cys-105 and Cys-201 are disulfide-bonded. Residue Gly-129 participates in ATP binding. The tract at residues 151–153 (KNQ) is interaction with tRNA. Residue Cys-201 is the Cysteine persulfide intermediate of the active site. Residues 307–308 (RY) are interaction with tRNA.

Belongs to the MnmA/TRMU family.

It localises to the cytoplasm. It carries out the reaction S-sulfanyl-L-cysteinyl-[protein] + uridine(34) in tRNA + AH2 + ATP = 2-thiouridine(34) in tRNA + L-cysteinyl-[protein] + A + AMP + diphosphate + H(+). In terms of biological role, catalyzes the 2-thiolation of uridine at the wobble position (U34) of tRNA, leading to the formation of s(2)U34. The chain is tRNA-specific 2-thiouridylase MnmA from Leptospira interrogans serogroup Icterohaemorrhagiae serovar Lai (strain 56601).